A 492-amino-acid chain; its full sequence is Uridine-cytidine kinase D (492 aa).

Residues 36 to 56 (PLPKNKKDHDQSIESDSSFTR) form a disordered region. 117–124 (GPVGAGKT) is an ATP binding site. The region spanning 290–460 (EPVYVCKAKY…PQTFLYLYFK (171 aa)) is the CYTH domain. A compositionally biased stretch (low complexity) spans 468 to 483 (PNYSKLKPNNTNSKIL). Positions 468-492 (PNYSKLKPNNTNSKILKNNKDKKNL) are disordered.

The protein belongs to the uridine kinase family.

It catalyses the reaction uridine + ATP = UMP + ADP + H(+). The enzyme catalyses cytidine + ATP = CMP + ADP + H(+). It participates in pyrimidine metabolism; CTP biosynthesis via salvage pathway; CTP from cytidine: step 1/3. It functions in the pathway pyrimidine metabolism; UMP biosynthesis via salvage pathway; UMP from uridine: step 1/1. Catalyzes the conversion of uridine into uridine monophosphate and cytidine into cytidine monophosphate in the pyrimidine salvage pathway. The chain is Uridine-cytidine kinase D (udkD) from Dictyostelium discoideum (Social amoeba).